The following is a 266-amino-acid chain: Indole-3-glycerol phosphate synthase (266 aa).

It belongs to the TrpC family.

The enzyme catalyses 1-(2-carboxyphenylamino)-1-deoxy-D-ribulose 5-phosphate + H(+) = (1S,2R)-1-C-(indol-3-yl)glycerol 3-phosphate + CO2 + H2O. Its pathway is amino-acid biosynthesis; L-tryptophan biosynthesis; L-tryptophan from chorismate: step 4/5. The polypeptide is Indole-3-glycerol phosphate synthase (Janthinobacterium sp. (strain Marseille) (Minibacterium massiliensis)).